The primary structure comprises 550 residues: Chaperonin GroEL (550 aa).

ATP is bound by residues 29-32 (TAGP), lysine 50, 86-90 (DGTTT), glycine 418, and aspartate 499.

The protein belongs to the chaperonin (HSP60) family. As to quaternary structure, forms a cylinder of 14 subunits composed of two heptameric rings stacked back-to-back. Interacts with the co-chaperonin GroES.

Its subcellular location is the cytoplasm. It carries out the reaction ATP + H2O + a folded polypeptide = ADP + phosphate + an unfolded polypeptide.. Its function is as follows. Together with its co-chaperonin GroES, plays an essential role in assisting protein folding. The GroEL-GroES system forms a nano-cage that allows encapsulation of the non-native substrate proteins and provides a physical environment optimized to promote and accelerate protein folding. The protein is Chaperonin GroEL of Wolbachia sp. subsp. Brugia malayi (strain TRS).